Consider the following 257-residue polypeptide: PHD finger protein Alfin1 (257 aa).

Residues 145-200 (SKDQLTAHNNGSNSKYKSSGKSRQSESQTKGVKMSAPVKEEVDSGEEEEEDDDEQG) form a disordered region. Residues 153–166 (NNGSNSKYKSSGKS) show a composition bias toward low complexity. Acidic residues predominate over residues 187 to 199 (DSGEEEEEDDDEQ). The PHD-type zinc-finger motif lies at 200-252 (GATCGACGDNYGTDEFWICCDMCEKWFHGKCVKITPAKAEHIKQYKCPGCSIK).

The protein belongs to the Alfin family. Interacts with H3K4me3 and to a lesser extent with H3K4me2. Predominantly expressed in the roots.

It is found in the nucleus. Functionally, histone-binding component that specifically recognizes H3 tails trimethylated on 'Lys-4' (H3K4me3), which mark transcription start sites of virtually all active genes. Transcriptional regulator that binds specifically to DNA sequences 5'-GNGGTG-3' or 5'-GTGGNG-3', including promoter elements of the salt-inducible PRP2 gene. Plays a role in salinity tolerance. This chain is PHD finger protein Alfin1 (ALFIN-1), found in Medicago sativa (Alfalfa).